Here is a 322-residue protein sequence, read N- to C-terminus: uncharacterized protein (322 aa).

Residues 205–286 (QEIKNAHAAL…LKKAISEAVQ (82 aa)) are a coiled coil. Composition is skewed to basic and acidic residues over residues 254–281 (EKEE…KKAI) and 290–299 (DRIEAIEKSR). Residues 254–322 (EKEEELNKKD…VQKSIWSGLF (69 aa)) form a disordered region. Positions 310–322 (SEQVQKSIWSGLF) are enriched in polar residues.

To B.subtilis XkdF.

This is an uncharacterized protein from Bacillus subtilis (strain 168).